The primary structure comprises 588 residues: Myc box-dependent-interacting protein 1 (588 aa).

N-acetylalanine is present on Ala2. The interaction with BIN2 stretch occupies residues 2–122 (AEMGSKGVTA…DYHQKLVDQA (121 aa)). 2 coiled-coil regions span residues 15–42 (ASNV…TKDE) and 193–274 (HLVA…EKQH). A BAR domain is found at 29 to 276 (VLQKLGKADE…LVSLEKQHGS (248 aa)). The segment at 279 to 355 (FTVKAQPSDN…PKHTPSKEMK (77 aa)) is disordered. Residues Ser296, Ser298, and Ser304 each carry the phosphoserine modification. At Thr308 the chain carries Phosphothreonine. Ser324 and Ser332 each carry phosphoserine. The tract at residues 379 to 422 (FEAPGPFSEQASLLDLDFEPLPPVASPVKAPTPSGQSIPWDLWE) is clathrin-binding. The disordered stretch occupies residues 448 to 484 (PSQTAEPGPAQPAEASEVVGGAQEPGETAASEATSSS). Residues 474–484 (ETAASEATSSS) show a composition bias toward low complexity. Residues 515–588 (GFMFKVQAQH…FPENFTERVQ (74 aa)) enclose the SH3 domain.

Heterodimer with AMPH. Binds SH3GLB1. Interacts (via SH3 domain) with DNM1. Interacts with SYNJ1. Interacts (via SH3 domain) with DNM2. Interacts with CLTC. Interacts with AP2A2. Interacts with AP2B1. Interacts with MYC (via N-terminal transactivation domain); the interaction requires the integrity of the conserved MYC box regions 1 and 2. Interacts with BIN2. Interacts with SNX4. Interacts (via BAR domain) with BACE1. Binds (via BAR domain) F-actin. Phosphorylated by protein kinase C. In terms of tissue distribution, isoform 1 is expressed mainly in the brain. Isoform 2 is widely expressed.

The protein localises to the nucleus. The protein resides in the cytoplasm. It is found in the endosome. Its subcellular location is the cell membrane. It localises to the sarcolemma. The protein localises to the T-tubule. In terms of biological role, is a key player in the control of plasma membrane curvature, and membrane shaping and remodeling. Required in muscle cells for the formation of T-tubules, tubular invaginations of the plasma membrane that function in depolarization-contraction coupling. Required in muscle cells for the formation of T-tubules, tubular invaginations of the plasma membrane that function in depolarization-contraction coupling. Is a negative regulator of endocytosis. Is also involved in the regulation of intracellular vesicles sorting, modulation of BACE1 trafficking and the control of amyloid-beta production. In neuronal circuits, endocytosis regulation may influence the internalization of PHF-tau aggregates. May be involved in the regulation of MYC activity and the control cell proliferation. In Mus musculus (Mouse), this protein is Myc box-dependent-interacting protein 1 (Bin1).